The sequence spans 999 residues: Ulvan lyase, long isoform (999 aa).

The N-terminal stretch at 1–21 is a signal peptide; it reads MKCLKTLLVSTTLLGAFSLNA. 126–127 provides a ligand contact to substrate; sequence SH. Residue His127 is the Proton donor/acceptor of the active site. Asp189, Asp199, and Lys201 together coordinate Ca(2+). Substrate is bound by residues Tyr280 and Arg297. Ca(2+) contacts are provided by Asp300, Asp303, and Tyr305. Tyr361 is a binding site for substrate.

Belongs to the polysaccharide lyase 24 family.

Functionally, ulvan lyase involved in ulvan degradation. Ulvan is the main polysaccharide component of the Ulvales (green seaweed) cell wall. It is composed of disaccharide building blocks comprising 3-sulfated rhamnose (Rha3S) linked to D-glucuronic acid (GlcA), L-iduronic acid (IduA), or D-xylose (Xyl). Ulvan lyase catalyzes preferentially the endolytic cleavage of the glycosidic bond between Rha3S and the uronic acid GlcA, but not IduA, producing oligosaccharides that have unsaturated 4-deoxy-L-threo-hex-4-enopyranosiduronic acid (deltaUA) at the non-reducing end. The most abundant end products in the degradation of the ulvan polysaccharide were deltaUA-Rha3S disaccharides and deltaUA-Rha3S-IduA-Rha3S and deltaUA-Rha3S-Xyl-Rha3S tetrasaccharides. The protein is Ulvan lyase, long isoform of Alteromonas sp.